The chain runs to 1322 residues: Sal-like protein 1 (1322 aa).

A disordered region spans residues 1–41; that stretch reads MSRRKQAKPQHFQSDPEVASLPRRDGDTEKGQPSRPTKSKD. Over residues 22–41 the composition is skewed to basic and acidic residues; the sequence is PRRDGDTEKGQPSRPTKSKD. The C2H2-type 1; atypical zinc-finger motif lies at 43–65; the sequence is HVCGRCCAEFFELSDLLLHKKSC. The interval 78 to 128 is disordered; sequence PASPAKTFPPGPSLNDPDDQMKDAANKADQEDCSDLSEPKGLDREESMEVE. Basic and acidic residues-rich tracts occupy residues 96–107 and 114–124; these read DQMKDAANKADQ and SEPKGLDREES. A Glycyl lysine isopeptide (Lys-Gly) (interchain with G-Cter in SUMO2) cross-link involves residue Lys440. 2 C2H2-type zinc fingers span residues 450–472 and 478–500; these read HKCRFCAKVFGSDSALQIHLRSH and FKCNICGNRFSTKGNLKVHFQRH. Residues 578-659 are disordered; the sequence is PIPISHSAAS…GGPGGTTFTN (82 aa). Polar residues predominate over residues 584–594; that stretch reads SAASPQGSVKS. Phosphoserine is present on residues Ser591, Ser594, and Ser596. Positions 629 to 645 are enriched in polar residues; the sequence is NMASSAVPTAGNSTLNS. Glycyl lysine isopeptide (Lys-Gly) (interchain with G-Cter in SUMO2) cross-links involve residues Lys672, Lys689, and Lys700. 3 C2H2-type zinc fingers span residues 705–727, 733–755, and 765–787; these read NECIICHRVLSCQSALKMHYRTH, FKCKICGRAFTTKGNLKTHYSVH, and HSCPICQKKFTNAVVLQQHIRMH. 2 disordered regions span residues 789 to 855 and 891 to 961; these read GGQI…SSPL and SMEG…GLSP. The segment covering 819-832 has biased composition (acidic residues); that stretch reads DLDNFSDENMEECP. Positions 842–855 are enriched in low complexity; sequence SADASQDSLSSSPL. Positions 898 to 935 are enriched in polar residues; that stretch reads TNDSSSVGGDMESQSAGSPAISESTSSMQALSPSNSTQ. A compositionally biased stretch (basic and acidic residues) spans 936 to 948; sequence EFHKSPGMEEKPQ. Ser940 carries the phosphoserine modification. Glycyl lysine isopeptide (Lys-Gly) (interchain with G-Cter in SUMO2) cross-links involve residues Lys946 and Lys981. 2 consecutive C2H2-type zinc fingers follow at residues 1000–1022 and 1028–1050; these read TACDICGKTFACQSALDIHYRSH and FICTVCNRGFSTKGNLKQHMLTH. Residue Lys1085 forms a Glycyl lysine isopeptide (Lys-Gly) (interchain with G-Cter in SUMO2) linkage. The segment at 1094–1119 is disordered; the sequence is VSPQDSKDAPTSHVPQGPLSSSATSP. C2H2-type zinc fingers lie at residues 1133–1155 and 1161–1183; these read HYCNTCGKTFSSSSALQIHERTH and FACTICGRAFTTKGNLKVHMGTH. Glycyl lysine isopeptide (Lys-Gly) (interchain with G-Cter in SUMO2) cross-links involve residues Lys1218, Lys1297, and Lys1317.

The protein belongs to the sal C2H2-type zinc-finger protein family. As to quaternary structure, may associate with NuRD histone deacetylase complex (HDAC). Interacts with components of HDAC complex including HDAC1, HDAC2, RBBP4, RBPP7, MTA1 and MTA2. Interacts with CCNQ. Interacts with NSD2 (via PHD-type zinc fingers 1, 2 and 3). In terms of tissue distribution, expressed in the metanephric mesenchyme surrounding ureteric bud.

Its subcellular location is the nucleus. In terms of biological role, transcriptional repressor involved in organogenesis. Plays an essential role in ureteric bud invasion during kidney development. The protein is Sal-like protein 1 (Sall1) of Mus musculus (Mouse).